Reading from the N-terminus, the 461-residue chain is Transcriptional activator RocR (461 aa).

Asp-57 carries the post-translational modification 4-aspartylphosphate. Positions 143–372 (ILGTSPAIQD…EHMIEGAMNF (230 aa)) constitute a Sigma-54 factor interaction domain. Residues 171–178 (GETGTGKE) and 233–242 (AHGGTLLLDE) each bind ATP. Residues 434-453 (ISKAAQELGISRQSLQYRLK) constitute a DNA-binding region (H-T-H motif).

Positive regulator of arginine catabolism. Controls the transcription of the two operons rocABC and rocDEF and probably acts by binding to the corresponding upstream activating sequences. The protein is Transcriptional activator RocR (rocR) of Bacillus subtilis (strain 168).